A 651-amino-acid polypeptide reads, in one-letter code: Translation factor GUF1 homolog, mitochondrial (651 aa).

The transit peptide at 1–26 directs the protein to the mitochondrion; sequence MAVTRAAAPMVGNCSSAMLIIGRRYF. Residues 51-228 enclose the tr-type G domain; the sequence is KKIRNFGIVA…AVVERLPPPK (178 aa). Residues 60–67, 121–125, and 175–178 contribute to the GTP site; these read AHVDHGKS, DTPGH, and NKVD.

The protein belongs to the TRAFAC class translation factor GTPase superfamily. Classic translation factor GTPase family. LepA subfamily.

It localises to the mitochondrion inner membrane. It carries out the reaction GTP + H2O = GDP + phosphate + H(+). In terms of biological role, promotes mitochondrial protein synthesis. May act as a fidelity factor of the translation reaction, by catalyzing a one-codon backward translocation of tRNAs on improperly translocated ribosomes. Binds to mitochondrial ribosomes in a GTP-dependent manner. The sequence is that of Translation factor GUF1 homolog, mitochondrial from Brugia malayi (Filarial nematode worm).